The chain runs to 133 residues: MLSPEAERVLRYLVEVEELAEEVLADKRQIVDLDTKRNQNREGLRALQKDLSLSEDVMVCFGNMFIKMPHPETKEMIEKDQDHLDKEIEKLRKQLKVKVDRLFEAQGKPELKGFNLNPLNQDELKALKIILKG.

The protein belongs to the prefoldin subunit beta family. As to quaternary structure, component of the PAQosome complex which is responsible for the biogenesis of several protein complexes and which consists of R2TP complex members RUVBL1, RUVBL2, RPAP3 and PIH1D1, URI complex members PFDN2, PFDN6, PDRG1, UXT and URI1 as well as ASDURF, POLR2E and DNAAF10/WDR92.

It is found in the cytoplasm. In terms of biological role, may play a role in chaperone-mediated protein folding. The chain is p53 and DNA damage-regulated protein 1 (PDRG1) from Pongo abelii (Sumatran orangutan).